We begin with the raw amino-acid sequence, 626 residues long: uncharacterized protein (626 aa).

This is an uncharacterized protein from Dictyostelium discoideum (Social amoeba).